A 237-amino-acid chain; its full sequence is LexA repressor (237 aa).

The span at 1–12 (MPVKDSSSNKKN) shows a compositional bias: polar residues. Positions 1–20 (MPVKDSSSNKKNQIGKLSER) are disordered. The H-T-H motif DNA-binding region spans 41 to 61 (IREIGDAAGLQSTSSVAYQLK). Positions 67–80 (GYLRRDPNKPRAVD) are enriched in basic and acidic residues. A disordered region spans residues 67–112 (GYLRRDPNKPRAVDVRALPDPIPSKPGRKPGPKKSSVAISPDPAET). Active-site for autocatalytic cleavage activity residues include serine 161 and lysine 198.

This sequence belongs to the peptidase S24 family. As to quaternary structure, homodimer.

The enzyme catalyses Hydrolysis of Ala-|-Gly bond in repressor LexA.. Its function is as follows. Represses a number of genes involved in the response to DNA damage (SOS response), including recA and lexA. In the presence of single-stranded DNA, RecA interacts with LexA causing an autocatalytic cleavage which disrupts the DNA-binding part of LexA, leading to derepression of the SOS regulon and eventually DNA repair. The chain is LexA repressor from Corynebacterium diphtheriae (strain ATCC 700971 / NCTC 13129 / Biotype gravis).